The primary structure comprises 144 residues: Mediator of RNA polymerase II transcription subunit 10 (144 aa).

It belongs to the Mediator complex subunit 10 family. As to quaternary structure, component of the Mediator complex.

It localises to the cytoplasm. The protein localises to the nucleus. It is found in the nucleus envelope. Its function is as follows. Component of the Mediator complex, a coactivator involved in the regulated transcription of nearly all RNA polymerase II-dependent genes. Mediator functions as a bridge to convey information from gene-specific regulatory proteins to the basal RNA polymerase II transcription machinery. Mediator is recruited to promoters by direct interactions with regulatory proteins and serves as a scaffold for the assembly of a functional preinitiation complex with RNA polymerase II and the general transcription factors. This Schizosaccharomyces pombe (strain 972 / ATCC 24843) (Fission yeast) protein is Mediator of RNA polymerase II transcription subunit 10 (med10).